A 499-amino-acid chain; its full sequence is uncharacterized protein (499 aa).

Disordered regions lie at residues 76–118 (QATA…RLSP) and 208–268 (DFET…DWAN). Residues 87–104 (DPEKQTGKSRYHPSEEIR) show a composition bias toward basic and acidic residues. Residues 208-263 (DFETEDDESGDDDSEDTGEDEDEEEWVAILEDEDEDDDDDDDDDEDDDDSDSDESL) are compositionally biased toward acidic residues. Serine 355 is modified (phosphoserine). Residues 478-499 (AEGQIRKLLFPKTNQSTQPKPK) form a disordered region. Residues 489-499 (KTNQSTQPKPK) are compositionally biased toward polar residues.

This is an uncharacterized protein from Arabidopsis thaliana (Mouse-ear cress).